The primary structure comprises 715 residues: Fatty acid oxidation complex subunit alpha (715 aa).

An enoyl-CoA hydratase region spans residues 1-190 (MTTTSAFMLN…RAGLVDDVVP (190 aa)). The 3-hydroxyacyl-CoA dehydrogenase stretch occupies residues 306-715 (GPLNSVGILG…WTNGETDQGN (410 aa)).

This sequence in the N-terminal section; belongs to the enoyl-CoA hydratase/isomerase family. It in the central section; belongs to the 3-hydroxyacyl-CoA dehydrogenase family. As to quaternary structure, heterotetramer of two alpha chains (FadJ) and two beta chains (FadI).

Its subcellular location is the cytoplasm. It carries out the reaction a (3S)-3-hydroxyacyl-CoA = a (2E)-enoyl-CoA + H2O. The catalysed reaction is a 4-saturated-(3S)-3-hydroxyacyl-CoA = a (3E)-enoyl-CoA + H2O. The enzyme catalyses a (3S)-3-hydroxyacyl-CoA + NAD(+) = a 3-oxoacyl-CoA + NADH + H(+). It catalyses the reaction (3S)-3-hydroxybutanoyl-CoA = (3R)-3-hydroxybutanoyl-CoA. Its pathway is lipid metabolism; fatty acid beta-oxidation. Functionally, catalyzes the formation of a hydroxyacyl-CoA by addition of water on enoyl-CoA. Also exhibits 3-hydroxyacyl-CoA epimerase and 3-hydroxyacyl-CoA dehydrogenase activities. The chain is Fatty acid oxidation complex subunit alpha from Salmonella schwarzengrund (strain CVM19633).